The following is a 409-amino-acid chain: Elongation factor Tu (409 aa).

A tr-type G domain is found at Lys-10–Glu-214. The interval Gly-19 to Thr-26 is G1. Gly-19–Thr-26 is a GTP binding site. Residue Thr-26 participates in Mg(2+) binding. Residues Gly-60 to Asn-64 are G2. Residues Asp-81 to Gly-84 form a G3 region. GTP contacts are provided by residues Asp-81–His-85 and Asn-136–Asp-139. The G4 stretch occupies residues Asn-136–Asp-139. Residues Ser-174–Leu-176 are G5.

It belongs to the TRAFAC class translation factor GTPase superfamily. Classic translation factor GTPase family. EF-Tu/EF-1A subfamily. As to quaternary structure, monomer.

The protein resides in the cytoplasm. It catalyses the reaction GTP + H2O = GDP + phosphate + H(+). GTP hydrolase that promotes the GTP-dependent binding of aminoacyl-tRNA to the A-site of ribosomes during protein biosynthesis. This is Elongation factor Tu from Trichodesmium erythraeum (strain IMS101).